The chain runs to 151 residues: Cytochrome c-type biogenesis protein CcmE (151 aa).

Residues 1 to 9 (MKGLKKKRR) are Cytoplasmic-facing. The chain crosses the membrane as a helical; Signal-anchor for type II membrane protein span at residues 10–30 (IQIIALAFVALAGSTALIGYA). The Periplasmic portion of the chain corresponds to 31-151 (MRDGINFFRS…FQHTEDQPQG (121 aa)). His123 and Tyr127 together coordinate heme.

The protein belongs to the CcmE/CycJ family.

The protein localises to the cell inner membrane. Functionally, heme chaperone required for the biogenesis of c-type cytochromes. Transiently binds heme delivered by CcmC and transfers the heme to apo-cytochromes in a process facilitated by CcmF and CcmH. The polypeptide is Cytochrome c-type biogenesis protein CcmE (Cereibacter sphaeroides (strain ATCC 17029 / ATH 2.4.9) (Rhodobacter sphaeroides)).